The sequence spans 104 residues: Ig kappa chain V region XP-1 (104 aa).

The tract at residues Ala1–Cys24 is framework-1. Residues Gln25–Ala35 are complementarity-determining-1. The interval Trp36–Tyr49 is framework-2. Residues Thr50–Ser56 are complementarity-determining-2. The framework-3 stretch occupies residues Gly57–Cys88. A complementarity-determining-3 region spans residues Glu89–Gly100. Positions Phe101–Gly104 are framework-4.

The chain is Ig kappa chain V region XP-1 from Oryctolagus cuniculus (Rabbit).